The sequence spans 367 residues: Innexin inx2 (367 aa).

Over 1 to 22 the chain is Cytoplasmic; that stretch reads MFDVFGSVKGLLKIDQVCIDNN. Residues 23 to 43 traverse the membrane as a helical segment; sequence VFRMHYKATVIILIAFSLLVT. Residues 44–109 are Extracellular-facing; sequence SRQYIGDPID…EDEVKYHKYY (66 aa). Residues 110-130 traverse the membrane as a helical segment; sequence QWVCFVLFFQAILFYVPRYLW. The segment at 130-179 is interaction with shg; sequence WKSWEGGRLKMLVMDLNSPIVNDECKNDRKKILVDYFIGNLNRHNFYAFR. Residues 131–179 lie on the Cytoplasmic side of the membrane; it reads KSWEGGRLKMLVMDLNSPIVNDECKNDRKKILVDYFIGNLNRHNFYAFR. Residues 180-200 form a helical membrane-spanning segment; that stretch reads FFVCEALNFVNVIGQIYFVDF. The Extracellular segment spans residues 201–266; sequence FLDGEFSTYG…VLPLNIVNEK (66 aa). A helical membrane pass occupies residues 267–287; the sequence is IYVFLWFWFIILSIMSGISLI. The Cytoplasmic segment spans residues 288 to 367; the sequence is YRIAVVAGPK…HSAHKRPFDA (80 aa).

The protein belongs to the pannexin family. As to quaternary structure, monomer and heterooligomer with ogre or Inx3 (via cytoplasmic C-terminal region). Interacts (via cytoplasmic loop) with shg (via cytoplasmic region). Interacts with arm. In terms of tissue distribution, in ovary, expressed in inner germarial sheath cells, prefollicular cells, follicle cells, nurse cells and oocytes. Expressed in embryonic epithelial cells. Expressed in foregut and hindgut from stage 11-17, segmentally repeated tracheal placodes at stage 14, salivary gland at stage 16 and proventriculus at stage 16-17 (at protein level). During germband extension stage (stage 7), expressed in epidermal epithelial cells. Expressed in cephalic furrow. Repeating epidermal pattern emerges at stage 11, refines to one or two cells at each side of the segment borders by stage 13. Expressed in the imaginal wing disk. In pupae, expressed in the CNS and in primary, secondary and tertiary pigment cells of the retina. Expressed in optic lamina of the adult CNS.

It localises to the cell membrane. Its subcellular location is the cell junction. The protein resides in the gap junction. It is found in the cytoplasm. The protein localises to the apical cell membrane. It localises to the apicolateral cell membrane. Its subcellular location is the basolateral cell membrane. The protein resides in the lateral cell membrane. In terms of biological role, structural components of the gap junctions. Involved in gap junctional communication between germline and somatic cells which is essential for normal oogenesis. In embryonic epidermis, required for epithelial morphogenesis. Required for keyhole formation during early stages of proventriculus development in response to wg signaling. In follicle cells, promotes the formation of egg chambers in part through regulation of shg and baz at the boundary between germ cells and follicle cells. In inner germarial sheath cells, required for survival of early germ cells and for cyst formation. This Drosophila melanogaster (Fruit fly) protein is Innexin inx2 (Inx2).